Here is a 94-residue protein sequence, read N- to C-terminus: Transcription factor PRE6 (94 aa).

Residues 1 to 20 are disordered; it reads MSSRRSSRSRQSGSSRISDD. Residues 6–60 enclose the bHLH domain; the sequence is SSRSRQSGSSRISDDQISDLVSKLQHLIPELRRRRSDKVSASKVLQETCNYIRNL.

This sequence belongs to the bHLH protein family. As to quaternary structure, interacts with HFR1.

The protein resides in the cytoplasm. The protein localises to the nucleus. Functionally, atypical and probable non DNA-binding bHLH transcription factor that regulates light-mediated responses in day light conditions by binding and inhibiting the activity of the bHLH transcription factor HFR1, a critical regulator of light signaling and shade avoidance. Forms non-functional heterodimers with HFR1, causing liberation and activation of PIF4 from the transcriptionally inactive HFR1-PIF4 complex. This is Transcription factor PRE6 (PRE6) from Arabidopsis thaliana (Mouse-ear cress).